A 602-amino-acid chain; its full sequence is Chaperone protein DnaK (602 aa).

At Thr199 the chain carries Phosphothreonine; by autocatalysis.

It belongs to the heat shock protein 70 family.

Functionally, acts as a chaperone. The polypeptide is Chaperone protein DnaK (Carsonella ruddii (strain PV)).